A 408-amino-acid chain; its full sequence is Peptidase T (408 aa).

Residue histidine 78 participates in Zn(2+) binding. Aspartate 80 is an active-site residue. Aspartate 140 lines the Zn(2+) pocket. Glutamate 173 functions as the Proton acceptor in the catalytic mechanism. 3 residues coordinate Zn(2+): glutamate 174, aspartate 196, and histidine 379.

This sequence belongs to the peptidase M20B family. Requires Zn(2+) as cofactor.

The protein localises to the cytoplasm. It catalyses the reaction Release of the N-terminal residue from a tripeptide.. Cleaves the N-terminal amino acid of tripeptides. This chain is Peptidase T, found in Salmonella arizonae (strain ATCC BAA-731 / CDC346-86 / RSK2980).